Reading from the N-terminus, the 496-residue chain is Cytochrome P450 71B14 (496 aa).

A helical membrane pass occupies residues 1–21 (MIWWFIVGASFFFAFILIAKD). Cys-436 serves as a coordination point for heme.

It belongs to the cytochrome P450 family. Requires heme as cofactor.

The protein localises to the membrane. The sequence is that of Cytochrome P450 71B14 (CYP71B14) from Arabidopsis thaliana (Mouse-ear cress).